A 121-amino-acid polypeptide reads, in one-letter code: MSITNEQILDAVAEMSVMQVVELIEAMEEKFGVTAAAAVVAGGAAAEAAEEQTEFDVILTAIGGNKVSVIKAVRGATGLGLKEAKGLVDSAPAALKEGVDKAEAEGLKAQLEEAGATVEIK.

It belongs to the bacterial ribosomal protein bL12 family. In terms of assembly, homodimer. Part of the ribosomal stalk of the 50S ribosomal subunit. Forms a multimeric L10(L12)X complex, where L10 forms an elongated spine to which 2 to 4 L12 dimers bind in a sequential fashion. Binds GTP-bound translation factors.

Forms part of the ribosomal stalk which helps the ribosome interact with GTP-bound translation factors. Is thus essential for accurate translation. This is Large ribosomal subunit protein bL12 from Aliivibrio salmonicida (strain LFI1238) (Vibrio salmonicida (strain LFI1238)).